The following is a 358-amino-acid chain: L-tryptophan methyltransferase trpM (358 aa).

This sequence belongs to the methyltransferase superfamily.

It catalyses the reaction L-tryptophan + S-adenosyl-L-methionine = N(alpha)-methyl-L-tryptophan + S-adenosyl-L-homocysteine + H(+). The catalysed reaction is N(alpha)-methyl-L-tryptophan + S-adenosyl-L-methionine = N(alpha),N(alpha)-dimethyl-L-tryptophan + S-adenosyl-L-homocysteine + H(+). The enzyme catalyses N(alpha),N(alpha)-dimethyl-L-tryptophan + S-adenosyl-L-methionine = N(alpha),N(alpha),N(alpha)-trimethyl-L-tryptophan + S-adenosyl-L-homocysteine + H(+). Methyltransferase that catalyzes iterative L-tryptophan N-methylations to produce L-abrine (N-alpha-methyl-L-tryptophan) and N,N-alpha-dimethyl-L-tryptophan. Also catalyzes a third methylation to yield L-hypaphorine (N,N,N-alpha-trimethyl-L-tryptopan), an agonist of the phytohormone indole-3-acetic acid. Can also N-methylate the non-native amino acid substrate 4-hydroxytryptophan, but the ability to incorporate trpM into a functional psilocybin biosynthesis pathway is indeed thwarted by the inability of the L-tryptophan decarboxylase psiD to use N,N-dimethyl-4-hydroxytryptophan as substrate. The protein is L-tryptophan methyltransferase trpM of Psilocybe serbica.